The chain runs to 530 residues: Equilibrative nucleoside transporter 4 (530 aa).

Residues 1–21 are disordered; it reads MGSVGSQRLEEPSVAGTPDPG. Topologically, residues 1–68 are extracellular; the sequence is MGSVGSQRLE…DEPVPDDRYH (68 aa). Residues 69–89 traverse the membrane as a helical segment; that stretch reads AIYFAMLLAGVGFLLPYNSFI. Over 90 to 101 the chain is Cytoplasmic; it reads TDVDYLHHKYPG. The chain crosses the membrane as a helical span at residues 102–122; it reads TSIVFDMSLTYILVALAAVLL. Topologically, residues 123–139 are extracellular; sequence NNVLVERLTLHTRITAG. A helical transmembrane segment spans residues 140-160; sequence YLLALGPLLFISICDVWLQLF. Residues 161–166 lie on the Cytoplasmic side of the membrane; sequence SRDQAY. The helical transmembrane segment at 167 to 187 threads the bilayer; it reads AINLAAVGTVAFGCTVQQSSF. Topologically, residues 188–231 are extracellular; it reads YGYTGMLPKRYTQGVMTGESTAGVMISLSRILTKLLLPDERAST. A helical transmembrane segment spans residues 232–252; sequence LIFFLVSVALELLCFLLHLLV. At 253 to 351 the chain is on the cytoplasmic side; sequence RRSRFVLFYT…LLLHRYVVAR (99 aa). Residues 352–372 traverse the membrane as a helical segment; sequence VIWADMLSIAVTYFITLCLFP. The Extracellular segment spans residues 373–381; the sequence is GLESEIRHC. The helical transmembrane segment at 382–402 threads the bilayer; it reads ILGEWLPILIMAVFNLSDFVG. Over 403 to 416 the chain is Cytoplasmic; sequence KILAALPVDWRGTH. Residues 417-437 form a helical membrane-spanning segment; sequence LLACSCLRVVFIPLFILCVYP. Topologically, residues 438-450 are extracellular; the sequence is SGMPALRHPAWPC. Residues 451-471 traverse the membrane as a helical segment; sequence IFSLLMGISNGYFGSVPMILA. Over 472 to 486 the chain is Cytoplasmic; the sequence is AGKVSPKQRELAGNT. Residues 487–509 form a helical membrane-spanning segment; the sequence is MTVSYMSGLTLGSAVAYCTYSLT. Residues 510-530 lie on the Extracellular side of the membrane; that stretch reads RDAHGSCLHASTANGSILAGL. A glycan (N-linked (GlcNAc...) asparagine) is linked at N523.

The protein belongs to the SLC29A/ENT transporter (TC 2.A.57) family. N-glycosylated. Mainly expressed in brain and skeletal muscle. In brain, expressed in cerebellum, cerebral cortex, medulla oblongata, occipital pole, frontal and temporal lobes putamen, spinal cord, substancia nigra, hippocampus, caudate nucleus, nucleus accumbens, pons and choroid plexus. Expressed in heart, in both cardiomyocytes and vascular endothelial cells. Also expressed in adrenal gland, small intestine, pancreas, kidney, liver, bone marrow, lymph node. Located in endometrial stroma, where the expression is high in the proliferative phase, decreases during the secretory phase, and is no longer detectable in the menstrual phase.

It localises to the cell membrane. Its subcellular location is the apical cell membrane. It carries out the reaction serotonin(out) = serotonin(in). It catalyses the reaction dopamine(out) = dopamine(in). The enzyme catalyses (R)-noradrenaline(out) = (R)-noradrenaline(in). The catalysed reaction is (R)-adrenaline(out) = (R)-adrenaline(in). It carries out the reaction histamine(out) = histamine(in). It catalyses the reaction tyramine(in) = tyramine(out). The enzyme catalyses guanidine(out) = guanidine(in). The catalysed reaction is adenosine(in) = adenosine(out). With respect to regulation, activated at acidic pH. Its function is as follows. Electrogenic voltage-dependent transporter that mediates the transport of a variety of endogenous bioactive amines, cationic xenobiotics and drugs. Utilizes the physiologic inside-negative membrane potential as a driving force to facilitate cellular uptake of organic cations. Functions as a Na(+)- and Cl(-)-independent bidirectional transporter. Substrate transport is pH-dependent and enhanced under acidic condition, which is most likely the result of allosteric changes in the transporter structure. Implicated in monoamine neurotransmitters uptake such as serotonin, dopamine, adrenaline/epinephrine, noradrenaline/norepinephrine, histamine and tyramine, thereby supporting a role in homeostatic regulation of aminergic neurotransmission in the central nervous system. Also responsible for the uptake of bioactive amines and drugs through the blood-cerebrospinal fluid (CSF) barrier, from the CSF into choroid plexus epithelial cells, thereby playing a significant role in the clearance of cationic neurotoxins, xenobiotics and metabolic waste in the brain. Involved in bidirectional transport of the purine nucleoside adenosine and plays a role in the regulation of extracellular adenosine concentrations in cardiac tissues, in particular during ischemia. May be involved in organic cation uptake from the tubular lumen into renal tubular cells, thereby contributing to organic cation reabsorption in the kidney. Also transports guanidine. This chain is Equilibrative nucleoside transporter 4, found in Homo sapiens (Human).